Here is a 167-residue protein sequence, read N- to C-terminus: Endoribonuclease YbeY (167 aa).

The disordered stretch occupies residues 64–101 (GKPTNVLSWPSEERASEEPGMAPEPPEPGDPEDPEPLG). A compositionally biased stretch (acidic residues) spans 90 to 99 (EPGDPEDPEP). Residues His131, His135, and His141 each contribute to the Zn(2+) site.

This sequence belongs to the endoribonuclease YbeY family. Zn(2+) serves as cofactor.

It localises to the cytoplasm. In terms of biological role, single strand-specific metallo-endoribonuclease involved in late-stage 70S ribosome quality control and in maturation of the 3' terminus of the 16S rRNA. In Cereibacter sphaeroides (strain ATCC 17023 / DSM 158 / JCM 6121 / CCUG 31486 / LMG 2827 / NBRC 12203 / NCIMB 8253 / ATH 2.4.1.) (Rhodobacter sphaeroides), this protein is Endoribonuclease YbeY.